The following is a 259-amino-acid chain: Large ribosomal subunit protein eL8 (259 aa).

The segment at 1–24 (MAPKSKKVAPSPFAQPKAAKTTKN) is disordered. Phosphoserine is present on residues Ser11 and Ser33.

This sequence belongs to the eukaryotic ribosomal protein eL8 family. In terms of assembly, component of the large ribosomal subunit (LSU). Mature yeast ribosomes consist of a small (40S) and a large (60S) subunit. The 40S small subunit contains 1 molecule of ribosomal RNA (18S rRNA) and at least 33 different proteins. The large 60S subunit contains 3 rRNA molecules (25S, 5.8S and 5S rRNA) and at least 46 different proteins.

The protein localises to the cytoplasm. Component of the ribosome, a large ribonucleoprotein complex responsible for the synthesis of proteins in the cell. The small ribosomal subunit (SSU) binds messenger RNAs (mRNAs) and translates the encoded message by selecting cognate aminoacyl-transfer RNA (tRNA) molecules. The large subunit (LSU) contains the ribosomal catalytic site termed the peptidyl transferase center (PTC), which catalyzes the formation of peptide bonds, thereby polymerizing the amino acids delivered by tRNAs into a polypeptide chain. The nascent polypeptides leave the ribosome through a tunnel in the LSU and interact with protein factors that function in enzymatic processing, targeting, and the membrane insertion of nascent chains at the exit of the ribosomal tunnel. The polypeptide is Large ribosomal subunit protein eL8 (rpl8) (Schizosaccharomyces pombe (strain 972 / ATCC 24843) (Fission yeast)).